The sequence spans 296 residues: Homoserine kinase (296 aa).

85–95 is a binding site for ATP; sequence PLSRGLGSSAA.

Belongs to the GHMP kinase family. Homoserine kinase subfamily.

Its subcellular location is the cytoplasm. It carries out the reaction L-homoserine + ATP = O-phospho-L-homoserine + ADP + H(+). The protein operates within amino-acid biosynthesis; L-threonine biosynthesis; L-threonine from L-aspartate: step 4/5. Its function is as follows. Catalyzes the ATP-dependent phosphorylation of L-homoserine to L-homoserine phosphate. The chain is Homoserine kinase from Clostridium acetobutylicum (strain ATCC 824 / DSM 792 / JCM 1419 / IAM 19013 / LMG 5710 / NBRC 13948 / NRRL B-527 / VKM B-1787 / 2291 / W).